We begin with the raw amino-acid sequence, 362 residues long: Sterol-4-alpha-carboxylate 3-dehydrogenase, decarboxylating (362 aa).

M1 is subject to N-acetylmethionine. Residue Y161 is the Proton acceptor of the active site. K165 is a binding site for NAD(+). A helical transmembrane segment spans residues 287–307; that stretch reads WMAYYLAFLLSLLVMVVSPLI. A Prevents secretion from ER motif is present at residues 359–362; it reads RKDK.

Belongs to the 3-beta-HSD family. In terms of assembly, homodimer.

The protein localises to the endoplasmic reticulum membrane. The protein resides in the lipid droplet. It carries out the reaction a 3beta-hydroxysteroid-4alpha-carboxylate + NADP(+) = a 3-oxosteroid + CO2 + NADPH. The catalysed reaction is a 3beta-hydroxysteroid-4alpha-carboxylate + NAD(+) = a 3-oxosteroid + CO2 + NADH. It catalyses the reaction 4alpha-carboxyzymosterol + NADP(+) = zymosterone + CO2 + NADPH. The enzyme catalyses 4alpha-carboxy-4beta-methyl-5alpha-cholest-8-en-3beta-ol + NADP(+) = 4alpha-methyl-5alpha-cholest-8-en-3-one + CO2 + NADPH. It carries out the reaction 4alpha-carboxy-5alpha-cholest-8-ene-3beta-ol + NADP(+) = 5alpha-cholest-8-en-3-one + CO2 + NADPH. The catalysed reaction is 4beta-methylzymosterol-4alpha-carboxylate + NADP(+) = 3-dehydro-4-methylzymosterol + CO2 + NADPH. It catalyses the reaction 4beta-methylzymosterol-4alpha-carboxylate + NAD(+) = 3-dehydro-4-methylzymosterol + CO2 + NADH. The enzyme catalyses 4alpha-carboxy-5alpha-cholest-8-ene-3beta-ol + NAD(+) = 5alpha-cholest-8-en-3-one + CO2 + NADH. It carries out the reaction 4alpha-carboxy-4beta-methyl-5alpha-cholest-8-en-3beta-ol + NAD(+) = 4alpha-methyl-5alpha-cholest-8-en-3-one + CO2 + NADH. The catalysed reaction is 4alpha-carboxyzymosterol + NAD(+) = zymosterone + CO2 + NADH. The protein operates within steroid biosynthesis; zymosterol biosynthesis; zymosterol from lanosterol: step 4/6. Its function is as follows. Catalyzes the NAD(P)(+)-dependent oxidative decarboxylation of the C4 methyl groups of 4-alpha-carboxysterols in post-squalene cholesterol biosynthesis. Plays a role in the regulation of the endocytic trafficking of EGFR. The polypeptide is Sterol-4-alpha-carboxylate 3-dehydrogenase, decarboxylating (Nsdhl) (Mus musculus (Mouse)).